The following is a 123-amino-acid chain: Alpha-lactalbumin (123 aa).

Residues 1–123 (KQFTKCELSQ…KLEQWLCEEL (123 aa)) enclose the C-type lysozyme domain. 4 cysteine pairs are disulfide-bonded: C6/C120, C28/C111, C61/C77, and C73/C91. Ca(2+) contacts are provided by K79, D82, D84, D87, and D88.

The protein belongs to the glycosyl hydrolase 22 family. Lactose synthase (LS) is a heterodimer of a catalytic component, beta1,4-galactosyltransferase (beta4Gal-T1) and a regulatory component, alpha-lactalbumin (LA). In terms of tissue distribution, mammary gland specific. Secreted in milk.

It localises to the secreted. Functionally, regulatory subunit of lactose synthase, changes the substrate specificity of galactosyltransferase in the mammary gland making glucose a good acceptor substrate for this enzyme. This enables LS to synthesize lactose, the major carbohydrate component of milk. In other tissues, galactosyltransferase transfers galactose onto the N-acetylglucosamine of the oligosaccharide chains in glycoproteins. In Equus asinus (Donkey), this protein is Alpha-lactalbumin (LALBA).